The following is a 197-amino-acid chain: Holliday junction branch migration complex subunit RuvA (197 aa).

The tract at residues 1–64 (MYEYIKGTYM…EDFIGLYGFG (64 aa)) is domain I. The interval 65-143 (SKEELELFNK…VNLDEGIQTD (79 aa)) is domain II. The tract at residues 144–149 (SNDIKV) is flexible linker. The tract at residues 149 to 197 (VSSKILEEAKEALMSLGYSEKECEKALKNVEEKESLEIIIKESLKFLMN) is domain III.

It belongs to the RuvA family. As to quaternary structure, homotetramer. Forms an RuvA(8)-RuvB(12)-Holliday junction (HJ) complex. HJ DNA is sandwiched between 2 RuvA tetramers; dsDNA enters through RuvA and exits via RuvB. An RuvB hexamer assembles on each DNA strand where it exits the tetramer. Each RuvB hexamer is contacted by two RuvA subunits (via domain III) on 2 adjacent RuvB subunits; this complex drives branch migration. In the full resolvosome a probable DNA-RuvA(4)-RuvB(12)-RuvC(2) complex forms which resolves the HJ.

It is found in the cytoplasm. The RuvA-RuvB-RuvC complex processes Holliday junction (HJ) DNA during genetic recombination and DNA repair, while the RuvA-RuvB complex plays an important role in the rescue of blocked DNA replication forks via replication fork reversal (RFR). RuvA specifically binds to HJ cruciform DNA, conferring on it an open structure. The RuvB hexamer acts as an ATP-dependent pump, pulling dsDNA into and through the RuvAB complex. HJ branch migration allows RuvC to scan DNA until it finds its consensus sequence, where it cleaves and resolves the cruciform DNA. The protein is Holliday junction branch migration complex subunit RuvA of Hathewaya histolytica (Clostridium histolyticum).